Here is a 189-residue protein sequence, read N- to C-terminus: Large ribosomal subunit protein uL5 (189 aa).

The protein belongs to the universal ribosomal protein uL5 family. Part of the 50S ribosomal subunit; part of the 5S rRNA/L5/L18/L25 subcomplex. Contacts the 5S rRNA and the P site tRNA. Forms a bridge to the 30S subunit in the 70S ribosome.

This is one of the proteins that bind and probably mediate the attachment of the 5S RNA into the large ribosomal subunit, where it forms part of the central protuberance. In the 70S ribosome it contacts protein S13 of the 30S subunit (bridge B1b), connecting the 2 subunits; this bridge is implicated in subunit movement. Contacts the P site tRNA; the 5S rRNA and some of its associated proteins might help stabilize positioning of ribosome-bound tRNAs. This chain is Large ribosomal subunit protein uL5, found in Corynebacterium jeikeium (strain K411).